The chain runs to 170 residues: Acetyl-CoA decarbonylase/synthase complex subunit epsilon 1 (170 aa).

Belongs to the CdhB family. In terms of assembly, heterotetramer of two alpha and two epsilon subunits. The ACDS complex is made up of alpha, epsilon, beta, gamma and delta subunits with a probable stoichiometry of (alpha(2)epsilon(2))(4)-beta(8)-(gamma(1)delta(1))(8).

It functions in the pathway one-carbon metabolism; methanogenesis from acetate. Its function is as follows. Part of a complex that catalyzes the reversible cleavage of acetyl-CoA, allowing growth on acetate as sole source of carbon and energy. The alpha-epsilon subcomponent functions as a carbon monoxide dehydrogenase. The precise role of the epsilon subunit is unclear; it may have a stabilizing role within the alpha(2)epsilon(2) component and/or be involved in electron transfer to FAD during a potential FAD-mediated CO oxidation. The polypeptide is Acetyl-CoA decarbonylase/synthase complex subunit epsilon 1 (cdhB1) (Methanosarcina thermophila).